The following is an 87-amino-acid chain: Kappa-4-bungarotoxin (87 aa).

The first 21 residues, Met-1–Thr-21, serve as a signal peptide directing secretion. Disulfide bonds link Cys-24-Cys-42, Cys-35-Cys-63, Cys-48-Cys-52, Cys-67-Cys-79, and Cys-80-Cys-85.

This sequence belongs to the three-finger toxin family. Long-chain subfamily. Kappa-neurotoxin sub-subfamily. In terms of assembly, homo- and heterodimer; non-covalently linked. As to expression, expressed by the venom gland.

It is found in the secreted. Its function is as follows. Postsynaptic neurotoxin that binds and inhibits neuronal nicotinic acetylcholine receptors (nAChR) with high affinity (IC(50)&lt;100 nM). Is a selective, and slowly reversible antagonist of alpha-3/CHRNA3-containing and some alpha-4/CHRNA4-containing AChRs. The chain is Kappa-4-bungarotoxin from Bungarus multicinctus (Many-banded krait).